The sequence spans 347 residues: UDP-N-acetylenolpyruvoylglucosamine reductase (347 aa).

The FAD-binding PCMH-type domain maps to 17-187 (IEQLAAQLVV…TAVGLKFAKA (171 aa)). Arg163 is a catalytic residue. The Proton donor role is filled by Ser232. The active site involves Glu327.

This sequence belongs to the MurB family. It depends on FAD as a cofactor.

The protein localises to the cytoplasm. The enzyme catalyses UDP-N-acetyl-alpha-D-muramate + NADP(+) = UDP-N-acetyl-3-O-(1-carboxyvinyl)-alpha-D-glucosamine + NADPH + H(+). It functions in the pathway cell wall biogenesis; peptidoglycan biosynthesis. Cell wall formation. The protein is UDP-N-acetylenolpyruvoylglucosamine reductase of Vibrio cholerae serotype O1 (strain ATCC 39315 / El Tor Inaba N16961).